Here is a 1174-residue protein sequence, read N- to C-terminus: MGCAASSQQTTATGGQPAAGEKANPAPANNNPNAANKAETTGAAEELTKESEPFVEPDPNYPDLSKHNNYLAESLTPSIYNKICNLRTLSGYSVDGCMQTGVDNPGHPFIKTVGLVAGDEECYDLFADLFDPTIDKRHNGYPRNAKHTTDLNPDHLKGGDDFDPKYVLSCRVRTGRCIRGYGLPPHCTRAERRDVEKVCKDALATLDGPLKGTYYPLTGMTEEMQDKLIADHFLFDKPVSPLLMSARMARDWPDGRGIWHNADKNFLVWINEEDHTRVISMETSGNMKNVFKRFCNGLNKVENALKAKGYEFSWNEHLGYVLTCPSNLGTGVRAGVHIKIPLFSKHAGFESILKHYRLQKRGTGGVDTASTDGTFDISNLDRLGTSEVQQVQSVVDGVKKLIELEKALEKGSDISGQIPRDPAIVRAEQVKEGYPDLSKHNNHLAHCLTYDIWKSLKDKKTPSGFTLDGCIQTGVMNPGHPHIMTVGMVAGDEESYDVFADIFDPVIDARHGGYPKDAVHVTNINHADLKGGDNLDPKYVLSCRVRTGRSIIGYSLPPHCTVEERAAVETITIGALDKFDGDLQGKYYPLEGMSDETQTQLIDDHFLFDKPVSPLLTAARMHRDWPQGRGIWHNENKNFLVWVNEEDHIRVISMEKDGNMRAVFKRFCEGLQKFEQMIKKDGKEFMWNKHLGYVLTCPSNLGTGLRAGVHVKLPLLSKYPRFDQILRALRLQKRGTGGVDTASTDGTFDISNLDRLGSSEVQQVQFVVDGVELLVQMEKKLEKGEDIFDILPQQCRPKPPIKPFSYDYPDFSLHNNWMSKCMTEEIYNKLCNLKTKGGVTLNDCIQTGIDNPGHPYIMTVGLVAGDEECYEVFAPLFDPVISARHGGYALDAKHPTNLNAAELKGGDDLDPEFVLSCRVRTGRCIRGLALPPCCTRAERAEVEKITTEALSTLSGPLKGKYYPLTGMTDEEQEKLIEDHFLFDKPVSPLLLCANMARDWPQGRGIWHNDEKNFLVWVNEEDHTRVISMEKSGNMKRVFERFCDGLKKVEDSIKSKGYQFMWNEHLGYVLTCPSNLGTGLRAGVHVKVPLLSQQKIFDSILDHMRLQKRGTGGVDTASTDGTFDISNSDRIGFSEVHLVQQLVDGVKLLVNLEKALMKGEDINSLLPEKLREDSS.

The segment covering 1-14 (MGCAASSQQTTATG) has biased composition (polar residues). The disordered stretch occupies residues 1 to 62 (MGCAASSQQT…PFVEPDPNYP (62 aa)). Low complexity predominate over residues 18-39 (AAGEKANPAPANNNPNAANKAE). In terms of domain architecture, Phosphagen kinase N-terminal 1 spans 53-139 (PFVEPDPNYP…FDPTIDKRHN (87 aa)). The 1; approximate repeat unit spans residues 61-414 (YPDLSKHNNY…EKALEKGSDI (354 aa)). The region spanning 166–408 (YVLSCRVRTG…KKLIELEKAL (243 aa)) is the Phosphagen kinase C-terminal 1 domain. Residues 169–173 (SCRVR), histidine 232, arginine 277, and 333–337 (RAGVH) contribute to the ATP site. Residues 426 to 512 (RAEQVKEGYP…FDPVIDARHG (87 aa)) enclose the Phosphagen kinase N-terminal 2 domain. One copy of the 2; approximate repeat lies at 434–787 (YPDLSKHNNH…EKKLEKGEDI (354 aa)). The Phosphagen kinase C-terminal 2 domain occupies 539 to 781 (YVLSCRVRTG…ELLVQMEKKL (243 aa)). ATP-binding positions include 542-546 (SCRVR), histidine 605, arginine 706, 734-739 (RGTGGV), and aspartate 749. The Phosphagen kinase N-terminal 3 domain maps to 800-886 (PIKPFSYDYP…FDPVISARHG (87 aa)). The stretch at 808–1161 (YPDFSLHNNW…EKALMKGEDI (354 aa)) is one 3; approximate repeat. Residues 913-1155 (FVLSCRVRTG…KLLVNLEKAL (243 aa)) enclose the Phosphagen kinase C-terminal 3 domain.

It belongs to the ATP:guanido phosphotransferase family. In terms of assembly, monomer.

The protein resides in the cytoplasm. Its subcellular location is the cytoskeleton. It is found in the flagellum axoneme. The catalysed reaction is creatine + ATP = N-phosphocreatine + ADP + H(+). Functionally, this axonemal protein participates in an energy shuttle that utilizes phosphocreatine to transfer the energy from ATP generated by the mitochondrion in the sperm head to dynein in the distal portions of the flagellum. The protein is Creatine kinase, flagellar of Strongylocentrotus purpuratus (Purple sea urchin).